The sequence spans 173 residues: NADH-ubiquinone oxidoreductase chain 6 (173 aa).

A run of 5 helical transmembrane segments spans residues 1–21 (MTYF…AVAS), 27–47 (YGVV…LSLG), 48–68 (ASFV…VVFV), 87–107 (VIGY…ISGF), and 139–159 (WGVG…FVVL).

The protein belongs to the complex I subunit 6 family.

It is found in the mitochondrion membrane. It catalyses the reaction a ubiquinone + NADH + 5 H(+)(in) = a ubiquinol + NAD(+) + 4 H(+)(out). Functionally, core subunit of the mitochondrial membrane respiratory chain NADH dehydrogenase (Complex I) that is believed to belong to the minimal assembly required for catalysis. Complex I functions in the transfer of electrons from NADH to the respiratory chain. The immediate electron acceptor for the enzyme is believed to be ubiquinone. The chain is NADH-ubiquinone oxidoreductase chain 6 (MT-ND6) from Brachyramphus marmoratus (Marbled murrelet).